Reading from the N-terminus, the 458-residue chain is tRNA modification GTPase MnmE (458 aa).

R26, E88, and R127 together coordinate (6S)-5-formyl-5,6,7,8-tetrahydrofolate. Residues 224–378 (GLSTAIIGRP…IEDRINQLFF (155 aa)) form the TrmE-type G domain. N234 is a binding site for K(+). GTP is bound by residues 234–239 (NVGKSS), 253–259 (TDIAGTT), and 278–281 (DTAG). Mg(2+) is bound at residue S238. K(+) is bound by residues T253, I255, and T258. T259 contributes to the Mg(2+) binding site. (6S)-5-formyl-5,6,7,8-tetrahydrofolate is bound at residue K458.

It belongs to the TRAFAC class TrmE-Era-EngA-EngB-Septin-like GTPase superfamily. TrmE GTPase family. As to quaternary structure, homodimer. Heterotetramer of two MnmE and two MnmG subunits. K(+) is required as a cofactor.

The protein localises to the cytoplasm. Functionally, exhibits a very high intrinsic GTPase hydrolysis rate. Involved in the addition of a carboxymethylaminomethyl (cmnm) group at the wobble position (U34) of certain tRNAs, forming tRNA-cmnm(5)s(2)U34. The polypeptide is tRNA modification GTPase MnmE (Streptococcus pyogenes serotype M5 (strain Manfredo)).